We begin with the raw amino-acid sequence, 124 residues long: MPTIQQLVRKGRRDKIAKVKTAALKGSPQRRGVCTRVYTTTPKKPNSALRKVARVKLTSQVEVTAYIPGEGHNLQEHSMVLVRGGRVKDLPGVRYKIIRGSLDTQGVKNRKQARSRYGAKKEKS.

D89 is subject to 3-methylthioaspartic acid. Residues 105–124 are disordered; that stretch reads QGVKNRKQARSRYGAKKEKS. Residues 108–118 are compositionally biased toward basic residues; that stretch reads KNRKQARSRYG.

This sequence belongs to the universal ribosomal protein uS12 family. As to quaternary structure, part of the 30S ribosomal subunit. Contacts proteins S8 and S17. May interact with IF1 in the 30S initiation complex.

With S4 and S5 plays an important role in translational accuracy. Its function is as follows. Interacts with and stabilizes bases of the 16S rRNA that are involved in tRNA selection in the A site and with the mRNA backbone. Located at the interface of the 30S and 50S subunits, it traverses the body of the 30S subunit contacting proteins on the other side and probably holding the rRNA structure together. The combined cluster of proteins S8, S12 and S17 appears to hold together the shoulder and platform of the 30S subunit. The sequence is that of Small ribosomal subunit protein uS12 (rpsL) from Mycolicibacterium smegmatis (strain ATCC 700084 / mc(2)155) (Mycobacterium smegmatis).